A 440-amino-acid polypeptide reads, in one-letter code: Transposon Ty1-GR1 Gag polyprotein (440 aa).

The segment covering 1–16 (MESQQLSQHSHISHGS) has biased composition (low complexity). 3 disordered regions span residues 1–93 (MESQ…MMTQ), 126–173 (PQSQ…RPPP), and 352–440 (GSRN…PGTY). Composition is skewed to polar residues over residues 48 to 60 (TKAN…TPAS), 71 to 93 (SPQT…MMTQ), and 127 to 152 (QSQF…GNTF). Residues 153 to 165 (TDSSSADSDMTST) are compositionally biased toward low complexity. An RNA-binding region spans residues 299 to 401 (NNGIHINNKV…NSKSKTARAH (103 aa)). Positions 402–418 (NVSTSNNSPSTDNDSIS) are enriched in low complexity. The residue at position 416 (S416) is a Phosphoserine. The segment covering 419 to 428 (KSTTEPIQLN) has biased composition (polar residues). Over residues 429–440 (NKHDLHLRPGTY) the composition is skewed to basic and acidic residues.

In terms of assembly, homotrimer.

It is found in the cytoplasm. Its function is as follows. Capsid protein (CA) is the structural component of the virus-like particle (VLP), forming the shell that encapsulates the retrotransposons dimeric RNA genome. The particles are assembled from trimer-clustered units and there are holes in the capsid shells that allow for the diffusion of macromolecules. CA also has nucleocapsid-like chaperone activity, promoting primer tRNA(i)-Met annealing to the multipartite primer-binding site (PBS), dimerization of Ty1 RNA and initiation of reverse transcription. This is Transposon Ty1-GR1 Gag polyprotein (TY1A-GR1) from Saccharomyces cerevisiae (strain ATCC 204508 / S288c) (Baker's yeast).